The sequence spans 284 residues: Probable protein phosphatase 2C 41 (284 aa).

Positions 35–282 (SYGFYLVRGM…DDISCVVVRF (248 aa)) constitute a PPM-type phosphatase domain. Mn(2+) contacts are provided by aspartate 72, glycine 73, aspartate 234, and aspartate 273.

The protein belongs to the PP2C family. The cofactor is Mg(2+). It depends on Mn(2+) as a cofactor.

It catalyses the reaction O-phospho-L-seryl-[protein] + H2O = L-seryl-[protein] + phosphate. The enzyme catalyses O-phospho-L-threonyl-[protein] + H2O = L-threonyl-[protein] + phosphate. This chain is Probable protein phosphatase 2C 41, found in Oryza sativa subsp. japonica (Rice).